The primary structure comprises 152 residues: Ribosome maturation factor RimP (152 aa).

Belongs to the RimP family.

Its subcellular location is the cytoplasm. Required for maturation of 30S ribosomal subunits. In Photorhabdus laumondii subsp. laumondii (strain DSM 15139 / CIP 105565 / TT01) (Photorhabdus luminescens subsp. laumondii), this protein is Ribosome maturation factor RimP.